We begin with the raw amino-acid sequence, 970 residues long: Isoleucine--tRNA ligase (970 aa).

Positions 65–75 (PYANGHLHIGH) match the 'HIGH' region motif. An L-isoleucyl-5'-AMP-binding site is contributed by glutamate 608. The 'KMSKS' region motif lies at 649–653 (KMSKS). Residue lysine 652 participates in ATP binding. Positions 943, 946, 962, and 965 each coordinate Zn(2+).

The protein belongs to the class-I aminoacyl-tRNA synthetase family. IleS type 1 subfamily. In terms of assembly, monomer. Zn(2+) serves as cofactor.

Its subcellular location is the cytoplasm. The enzyme catalyses tRNA(Ile) + L-isoleucine + ATP = L-isoleucyl-tRNA(Ile) + AMP + diphosphate. Its function is as follows. Catalyzes the attachment of isoleucine to tRNA(Ile). As IleRS can inadvertently accommodate and process structurally similar amino acids such as valine, to avoid such errors it has two additional distinct tRNA(Ile)-dependent editing activities. One activity is designated as 'pretransfer' editing and involves the hydrolysis of activated Val-AMP. The other activity is designated 'posttransfer' editing and involves deacylation of mischarged Val-tRNA(Ile). The sequence is that of Isoleucine--tRNA ligase from Ruegeria pomeroyi (strain ATCC 700808 / DSM 15171 / DSS-3) (Silicibacter pomeroyi).